Consider the following 175-residue polypeptide: Microfibril-associated glycoprotein 3 (175 aa).

The Cytoplasmic portion of the chain corresponds to 1–175 (FRTEGAEKLQ…KDGSFESCQL (175 aa)). Positions 85–175 (KERPALNAQD…KDGSFESCQL (91 aa)) are disordered. Polar residues predominate over residues 145–175 (QDSSHFSPPDDTGSTESNSNYKDGSFESCQL).

In terms of processing, glycosylated.

It localises to the cell membrane. Component of the elastin-associated microfibrils. The polypeptide is Microfibril-associated glycoprotein 3 (MFAP3) (Bos taurus (Bovine)).